A 247-amino-acid polypeptide reads, in one-letter code: Spermatogenesis-associated protein 46 (247 aa).

The segment at 125–164 (QRDSCLPEDTADSVCSSSPSPENTCPREATKKSRPGPDTT) is disordered. The span at 137–147 (SVCSSSPSPEN) shows a compositional bias: polar residues.

The protein localises to the nucleus membrane. In terms of biological role, plays a role in spermiogenesis and fertilization. The chain is Spermatogenesis-associated protein 46 (SPATA46) from Bos taurus (Bovine).